A 1887-amino-acid chain; its full sequence is Protein TIC 214 (1887 aa).

A run of 6 helical transmembrane segments spans residues 18–38 (IINSVVVVGLYYGFLTTFSIG), 64–84 (FITGQLMMFISIYYAPLHLAL), 87–107 (PHTITVLALPYLLFHFFWNNH), 124–144 (LSIQCVFLNNLIFQLFNHFIL), 172–192 (VGWLIGHILFMKWLGLVLVWI), and 221–241 (IFSILLFITCVYYLGRIPSPI). 3 disordered regions span residues 248–300 (EASK…EGWD), 786–805 (EEQTKREEKKEKDKKEDNKR), and 1569–1603 (LPSNKKIKNRSQETKEPPSQRERGSDIENKGNLSP). The span at 256–268 (VESEEERDVEIET) shows a compositional bias: acidic residues. A coiled-coil region spans residues 775–816 (KEREFKILESREEQTKREEKKEKDKKEDNKRKEQARIAIEEA). A compositionally biased stretch (basic and acidic residues) spans 1578–1597 (RSQETKEPPSQRERGSDIEN).

Belongs to the TIC214 family. As to quaternary structure, part of the Tic complex.

It is found in the plastid. It localises to the chloroplast inner membrane. Its function is as follows. Involved in protein precursor import into chloroplasts. May be part of an intermediate translocation complex acting as a protein-conducting channel at the inner envelope. The protein is Protein TIC 214 of Solanum bulbocastanum (Wild potato).